The sequence spans 726 residues: Catalase-peroxidase (726 aa).

Residues 1–33 (MSTSDDIHNTTATGKCPFHQGGHDQSAGAGTTT) are disordered. Residues 105-226 (WHGAGTYRSI…LGATEMGLIY (122 aa)) constitute a cross-link (tryptophyl-tyrosyl-methioninium (Trp-Tyr) (with M-252)). Catalysis depends on H106, which acts as the Proton acceptor. The tryptophyl-tyrosyl-methioninium (Tyr-Met) (with W-105) cross-link spans 226–252 (YVNPEGPDHSGEPLSAAAAIRATFGNM). H267 is a binding site for heme b.

It belongs to the peroxidase family. Peroxidase/catalase subfamily. As to quaternary structure, homodimer or homotetramer. Heme b serves as cofactor. Formation of the three residue Trp-Tyr-Met cross-link is important for the catalase, but not the peroxidase activity of the enzyme.

It carries out the reaction H2O2 + AH2 = A + 2 H2O. The enzyme catalyses 2 H2O2 = O2 + 2 H2O. Functionally, bifunctional enzyme with both catalase and broad-spectrum peroxidase activity. This is Catalase-peroxidase from Shigella boydii serotype 4 (strain Sb227).